A 390-amino-acid polypeptide reads, in one-letter code: Succinate--CoA ligase [ADP-forming] subunit beta (390 aa).

Residues 9 to 245 form the ATP-grasp domain; that stretch reads KHLLKKYNIP…TTQEDEHETM (237 aa). Residues Lys46, 53–55, Glu99, Ser102, and Glu107 contribute to the ATP site; that span reads GRG. Mg(2+)-binding residues include Asn200 and Asp214. Substrate-binding positions include Asn265 and 322–324; that span reads GIV.

This sequence belongs to the succinate/malate CoA ligase beta subunit family. In terms of assembly, heterotetramer of two alpha and two beta subunits. Mg(2+) serves as cofactor.

It catalyses the reaction succinate + ATP + CoA = succinyl-CoA + ADP + phosphate. The enzyme catalyses GTP + succinate + CoA = succinyl-CoA + GDP + phosphate. The protein operates within carbohydrate metabolism; tricarboxylic acid cycle; succinate from succinyl-CoA (ligase route): step 1/1. Succinyl-CoA synthetase functions in the citric acid cycle (TCA), coupling the hydrolysis of succinyl-CoA to the synthesis of either ATP or GTP and thus represents the only step of substrate-level phosphorylation in the TCA. The beta subunit provides nucleotide specificity of the enzyme and binds the substrate succinate, while the binding sites for coenzyme A and phosphate are found in the alpha subunit. This is Succinate--CoA ligase [ADP-forming] subunit beta from Coxiella burnetii (strain CbuK_Q154) (Coxiella burnetii (strain Q154)).